The chain runs to 487 residues: MEETSLRRRREDEKSTHSTELKTTSLQKEVGLLSGICIIVGTIIGSGIFISPKSVLANTESVGPCLIIWAACGILATLGALCFAELGTMITKSGGEYPYLMEAFGPIPAYLFSWTSLIVMKPSSFAIICLSFSEYVCAAFYSGCKPPAVVVKLLAAAAILFITTVNALSVRLGSYVQNVFTAAKMVIVAIIIISGLVFLAQGNVKNFQNSFEGTQTSVGAISLAFYNGLWAYDGWNQLNYITEELRNPYRNLPMAIVIGIPLVTVCYILMNIAYFTVMTPTELLQSQAVAVTFGDRVLYPASWVVPLFVAFSTIGAANGTCFTAGRLIYVAGREGHMLKVLSYISVKRLTPAPALIFYGIIAIIYIIPGDINSLVNYFSFAAWLFYGMTILGLVVMRFTRKDLERPIKVPLFIPIIVILVSLFLILAPIISEPAWEYLYCVLFILSGLIFYFLFVYYKFGWAQRISRPVTKHLQMLMEVVPPEKDPE.

The disordered stretch occupies residues 1–20 (MEETSLRRRREDEKSTHSTE). The Cytoplasmic segment spans residues 1–31 (MEETSLRRRREDEKSTHSTELKTTSLQKEVG). The residue at position 18 (Ser18) is a Phosphoserine. A helical transmembrane segment spans residues 32-55 (LLSGICIIVGTIIGSGIFISPKSV). 43–47 (IIGSG) contacts L-arginine. At 56–62 (LANTESV) the chain is on the extracellular side. A helical transmembrane segment spans residues 63–84 (GPCLIIWAACGILATLGALCFA). Residues 85–110 (ELGTMITKSGGEYPYLMEAFGPIPAY) lie on the Cytoplasmic side of the membrane. Residues 111 to 137 (LFSWTSLIVMKPSSFAIICLSFSEYVC) form a helical membrane-spanning segment. Topologically, residues 138 to 147 (AAFYSGCKPP) are extracellular. The next 2 helical transmembrane spans lie at 148–169 (AVVV…NALS) and 170–193 (VRLG…IIII). At 194 to 217 (SGLVFLAQGNVKNFQNSFEGTQTS) the chain is on the extracellular side. The chain crosses the membrane as a helical span at residues 218–238 (VGAISLAFYNGLWAYDGWNQL). Asp233 contacts L-arginine. Topologically, residues 239 to 251 (NYITEELRNPYRN) are cytoplasmic. Residues 252-274 (LPMAIVIGIPLVTVCYILMNIAY) form a helical membrane-spanning segment. At 275-302 (FTVMTPTELLQSQAVAVTFGDRVLYPAS) the chain is on the extracellular side. Residues 303–325 (WVVPLFVAFSTIGAANGTCFTAG) traverse the membrane as a helical segment. Topologically, residues 326–351 (RLIYVAGREGHMLKVLSYISVKRLTP) are cytoplasmic. A run of 2 helical transmembrane segments spans residues 352 to 370 (APAL…IPGD) and 371 to 391 (INSL…MTIL). Topologically, residues 392–410 (GLVVMRFTRKDLERPIKVP) are cytoplasmic. Residues 411–431 (LFIPIIVILVSLFLILAPIIS) traverse the membrane as a helical segment. Topologically, residues 432-434 (EPA) are extracellular. The helical transmembrane segment at 435-450 (WEYLYCVLFILSGLIF) threads the bilayer. Residues 451–487 (YFLFVYYKFGWAQRISRPVTKHLQMLMEVVPPEKDPE) are Cytoplasmic-facing.

It belongs to the amino acid-polyamine-organocation (APC) superfamily. In terms of assembly, disulfide-linked heterodimer composed of the catalytic light chain subunit SLC7A9 and the heavy chain subunit SLC3A1. The heterodimer is the minimal functional unit. Assembles in heterotetramers (dimers of heterodimers) and higher order oligomers; the oligomerization is mediated by SLC3A1 likely to prevent degradation and facilitate heteromer trafficking to the plasma membrane. Interacts with CAV1. In terms of tissue distribution, expressed in the brush border membrane in the kidney (at protein level).

The protein resides in the apical cell membrane. It carries out the reaction L-leucine(out) + L-arginine(in) = L-leucine(in) + L-arginine(out). The catalysed reaction is L-histidine(out) + L-arginine(in) = L-histidine(in) + L-arginine(out). The enzyme catalyses L-arginine(in) + L-phenylalanine(out) = L-arginine(out) + L-phenylalanine(in). It catalyses the reaction L-cysteine(out) + L-arginine(in) = L-cysteine(in) + L-arginine(out). It carries out the reaction L-cystine(out) + L-arginine(in) = L-cystine(in) + L-arginine(out). The catalysed reaction is L-lysine(out) + L-arginine(in) = L-lysine(in) + L-arginine(out). Its function is as follows. Associates with SLC3A1 to form a functional transporter complex that mediates the electrogenic exchange between cationic amino acids and neutral amino acids, with a stoichiometry of 1:1. Has system b(0,+)-like activity with high affinity for extracellular cationic amino acids and L-cystine and lower affinity for intracellular neutral amino acids. Substrate exchange is driven by high concentration of intracellular neutral amino acids and the intracellular reduction of L-cystine to L-cysteine. Required for reabsorption of L-cystine and dibasic amino acids across the brush border membrane in renal proximal tubules. The sequence is that of b(0,+)-type amino acid transporter 1 (Slc7a9) from Mus musculus (Mouse).